Consider the following 205-residue polypeptide: Protein N-terminal glutamine amidohydrolase (205 aa).

Residues C20, H74, and D90 contribute to the active site.

It belongs to the NTAQ1 family. In terms of assembly, monomer.

It catalyses the reaction N-terminal L-glutaminyl-[protein] + H2O = N-terminal L-glutamyl-[protein] + NH4(+). Its function is as follows. Mediates the side-chain deamidation of N-terminal glutamine residues to glutamate, an important step in N-end rule pathway of protein degradation. Conversion of the resulting N-terminal glutamine to glutamate renders the protein susceptible to arginylation, polyubiquitination and degradation as specified by the N-end rule. Does not act on substrates with internal or C-terminal glutamine and does not act on non-glutamine residues in any position. The protein is Protein N-terminal glutamine amidohydrolase (tun) of Drosophila virilis (Fruit fly).